We begin with the raw amino-acid sequence, 238 residues long: Transcriptional repressor ThaA (238 aa).

The region spanning 169 to 234 is the HTH luxR-type domain; it reads IPGEIARVSL…HAAVKATLVG (66 aa). A DNA-binding region (H-T-H motif) is located at residues 193-212; the sequence is VSEISSILQMSVRNINFHIQ.

This sequence belongs to the autoinducer-regulated transcriptional regulatory protein family.

Its function is as follows. Represses thailandamide production. The sequence is that of Transcriptional repressor ThaA from Burkholderia thailandensis (strain ATCC 700388 / DSM 13276 / CCUG 48851 / CIP 106301 / E264).